A 460-amino-acid polypeptide reads, in one-letter code: UDP-N-acetylmuramoylalanine--D-glutamate ligase (460 aa).

122–128 (GSNGKST) lines the ATP pocket.

It belongs to the MurCDEF family.

The protein localises to the cytoplasm. It catalyses the reaction UDP-N-acetyl-alpha-D-muramoyl-L-alanine + D-glutamate + ATP = UDP-N-acetyl-alpha-D-muramoyl-L-alanyl-D-glutamate + ADP + phosphate + H(+). Its pathway is cell wall biogenesis; peptidoglycan biosynthesis. Functionally, cell wall formation. Catalyzes the addition of glutamate to the nucleotide precursor UDP-N-acetylmuramoyl-L-alanine (UMA). In Jannaschia sp. (strain CCS1), this protein is UDP-N-acetylmuramoylalanine--D-glutamate ligase.